The chain runs to 318 residues: Probable dual-specificity RNA methyltransferase RlmN (318 aa).

Glutamate 63 acts as the Proton acceptor in catalysis. A Radical SAM core domain is found at 69 to 299 (HDYGRTVCVS…VSLRRELGAD (231 aa)). A disulfide bridge connects residues cysteine 76 and cysteine 304. Positions 83, 87, and 90 each coordinate [4Fe-4S] cluster. Residues 130-131 (GE), serine 162, 185-187 (SLH), and asparagine 261 each bind S-adenosyl-L-methionine. Cysteine 304 acts as the S-methylcysteine intermediate in catalysis.

Belongs to the radical SAM superfamily. RlmN family. [4Fe-4S] cluster serves as cofactor.

Its subcellular location is the cytoplasm. The catalysed reaction is adenosine(2503) in 23S rRNA + 2 reduced [2Fe-2S]-[ferredoxin] + 2 S-adenosyl-L-methionine = 2-methyladenosine(2503) in 23S rRNA + 5'-deoxyadenosine + L-methionine + 2 oxidized [2Fe-2S]-[ferredoxin] + S-adenosyl-L-homocysteine. It carries out the reaction adenosine(37) in tRNA + 2 reduced [2Fe-2S]-[ferredoxin] + 2 S-adenosyl-L-methionine = 2-methyladenosine(37) in tRNA + 5'-deoxyadenosine + L-methionine + 2 oxidized [2Fe-2S]-[ferredoxin] + S-adenosyl-L-homocysteine. Functionally, specifically methylates position 2 of adenine 2503 in 23S rRNA and position 2 of adenine 37 in tRNAs. This chain is Probable dual-specificity RNA methyltransferase RlmN, found in Desulforudis audaxviator (strain MP104C).